The following is a 285-amino-acid chain: Shikimate dehydrogenase (NADP(+)) (285 aa).

Residues 19–21 and threonine 66 contribute to the shikimate site; that span reads SLS. Catalysis depends on lysine 70, which acts as the Proton acceptor. Residues asparagine 91 and aspartate 107 each coordinate shikimate. NADP(+) contacts are provided by residues 129–133 and leucine 228; that span reads GSGGA. Tyrosine 230 is a shikimate binding site. Glycine 251 provides a ligand contact to NADP(+).

It belongs to the shikimate dehydrogenase family. As to quaternary structure, homodimer.

It catalyses the reaction shikimate + NADP(+) = 3-dehydroshikimate + NADPH + H(+). Its pathway is metabolic intermediate biosynthesis; chorismate biosynthesis; chorismate from D-erythrose 4-phosphate and phosphoenolpyruvate: step 4/7. Its function is as follows. Involved in the biosynthesis of the chorismate, which leads to the biosynthesis of aromatic amino acids. Catalyzes the reversible NADPH linked reduction of 3-dehydroshikimate (DHSA) to yield shikimate (SA). The chain is Shikimate dehydrogenase (NADP(+)) from Prochlorococcus marinus (strain MIT 9515).